The following is a 192-amino-acid chain: Adenylate kinase (192 aa).

ATP is bound at residue 10-18; the sequence is GVPGVGSTT.

The protein belongs to the archaeal adenylate kinase family. As to quaternary structure, monomer.

It localises to the cytoplasm. It catalyses the reaction AMP + ATP = 2 ADP. The chain is Adenylate kinase from Methanococcus vannielii (strain ATCC 35089 / DSM 1224 / JCM 13029 / OCM 148 / SB).